A 165-amino-acid chain; its full sequence is Cyclic pyranopterin monophosphate synthase (165 aa).

Substrate is bound by residues 83–85 (FCH) and 120–121 (ME). Asp-135 is an active-site residue.

The protein belongs to the MoaC family. Homohexamer; trimer of dimers.

It carries out the reaction (8S)-3',8-cyclo-7,8-dihydroguanosine 5'-triphosphate = cyclic pyranopterin phosphate + diphosphate. Its pathway is cofactor biosynthesis; molybdopterin biosynthesis. Catalyzes the conversion of (8S)-3',8-cyclo-7,8-dihydroguanosine 5'-triphosphate to cyclic pyranopterin monophosphate (cPMP). This is Cyclic pyranopterin monophosphate synthase from Xanthomonas campestris pv. campestris (strain B100).